Reading from the N-terminus, the 602-residue chain is Glutamine--fructose-6-phosphate aminotransferase [isomerizing] (602 aa).

The active-site Nucleophile; for GATase activity is Cys2. The Glutamine amidotransferase type-2 domain occupies 2 to 217; that stretch reads CGIVGVVGNT…DQELVIVKAD (216 aa). The interval 67 to 87 is disordered; that stretch reads IGHTRWATHGKPTEDNAHPHR. Positions 77 to 87 are enriched in basic and acidic residues; the sequence is KPTEDNAHPHR. 2 SIS domains span residues 283–422 and 455–592; these read IIKA…ANGN and VREL…VDKP. Lys597 (for Fru-6P isomerization activity) is an active-site residue.

As to quaternary structure, homodimer.

It localises to the cytoplasm. It carries out the reaction D-fructose 6-phosphate + L-glutamine = D-glucosamine 6-phosphate + L-glutamate. In terms of biological role, catalyzes the first step in hexosamine metabolism, converting fructose-6P into glucosamine-6P using glutamine as a nitrogen source. This chain is Glutamine--fructose-6-phosphate aminotransferase [isomerizing], found in Streptococcus pneumoniae serotype 4 (strain ATCC BAA-334 / TIGR4).